The sequence spans 309 residues: Dioxygenase af480 (309 aa).

Positions 153, 155, and 228 each coordinate Fe cation.

The protein belongs to the PhyH family. Fe cation is required as a cofactor.

It carries out the reaction 5-dehydro-6-demethoxyfumagillol + 2-oxoglutarate + O2 = 5-dehydro-6-demethoxy-6-hydroxyfumagillol + succinate + CO2. It participates in secondary metabolite biosynthesis; terpenoid biosynthesis. Functionally, dioxygenase; part of the gene cluster that mediates the biosynthesis of fumagillin, a meroterpenoid that has numerous biological activities including irreversible inhibition of human type 2 methionine aminopeptidase (METAP2). Within the pathway, the dioxygenase af480 acts as a 5-dehydro-6-demethoxyfumagillol dioxygenase that hydroylates 5-keto-demethoxyfumagillol at position C-6. The pathway begins with the conversion of farnesyl pyrophosphate (FPP) to beta-trans-bergamotene by the membrane-bound beta-trans-bergamotene synthase af520. The multifunctional cytochrome P450 monooxygenase af510 then converts beta-trans-bergamotene into 5-keto-demethoxyfumagillol via several oxydation steps. 5-keto-demethoxyfumagillol is then subjected to successive C-6 hydroxylation and O-methylation by the dioxygenase af480 and O-methyltransferase af390-400, respectively, to yield 5-keto-fumagillol, which is then stereoselectively reduced by the keto-reductase af490 to 5R-hydroxy-seco-sesquiterpene. The next step is the polyketide transferase af380-catalyzed transfer of a dodecapentaenoyl group synthesized by the polyketide synthase af370 onto 5R-hydroxy-seco-sesquiterpene which leads to the production of prefumagillin. Finally, oxidative cleavage by the monooxygenase af470 converts prefumagillin to fumagillin. In Aspergillus fumigatus (strain ATCC MYA-4609 / CBS 101355 / FGSC A1100 / Af293) (Neosartorya fumigata), this protein is Dioxygenase af480.